Consider the following 616-residue polypeptide: GDP-Man:Man(3)GlcNAc(2)-PP-Dol alpha-1,2-mannosyltransferase (616 aa).

Position 1 (M1) is a topological domain, lumenal. The helical transmembrane segment at 2-21 (GYLVVIGVIACVAYGILQVV) threads the bilayer. Over 22 to 199 (STVLPRLLLV…RLIDGDYWKR (178 aa)) the chain is Cytoplasmic. The helical intramembrane region spans 200–220 (FTLIGQLFGSMVLSWEAMFEL). At 221 to 460 (SPDVWIDTIG…FGLNAMWNEH (240 aa)) the chain is on the cytoplasmic side. The segment at residues 461–481 (FGIGVVEYMSRGVIPLCHASA) is an intramembrane region (helical). Residues 482-616 (GPLLDIVTNW…ERRSGIEKVY (135 aa)) lie on the Cytoplasmic side of the membrane.

The protein belongs to the glycosyltransferase group 1 family.

Its subcellular location is the endoplasmic reticulum membrane. The catalysed reaction is an alpha-D-Man-(1-&gt;3)-[alpha-D-Man-(1-&gt;6)]-beta-D-Man-(1-&gt;4)-beta-D-GlcNAc-(1-&gt;4)-alpha-D-GlcNAc-diphospho-di-trans,poly-cis-dolichol + 2 GDP-alpha-D-mannose = an alpha-D-Man-(1-&gt;2)-alpha-D-Man-(1-&gt;2)-alpha-D-Man-(1-&gt;3)-[alpha-D-Man-(1-&gt;6)]-beta-D-Man-(1-&gt;4)-beta-D-GlcNAc-(1-&gt;4)-alpha-D-GlcNAc-diphospho-di-trans,poly-cis-dolichol + 2 GDP + 2 H(+). The protein operates within protein modification; protein glycosylation. In terms of biological role, GDP-Man:Man(3)GlcNAc(2)-PP-Dol alpha-1,2-mannosyltransferase that operates in the biosynthetic pathway of dolichol-linked oligosaccharides, the glycan precursors employed in protein asparagine (N)-glycosylation. The assembly of dolichol-linked oligosaccharides begins on the cytosolic side of the endoplasmic reticulum membrane and finishes in its lumen. The sequential addition of sugars to dolichol pyrophosphate produces dolichol-linked oligosaccharides containing fourteen sugars, including two GlcNAcs, nine mannoses and three glucoses. Once assembled, the oligosaccharide is transferred from the lipid to nascent proteins by oligosaccharyltransferases. Catalyzes, on the cytoplasmic face of the endoplasmic reticulum, the addition of the fourth and fifth mannose residues to the dolichol-linked oligosaccharide chain, to produce Man(5)GlcNAc(2)-PP-dolichol core oligosaccharide. The polypeptide is GDP-Man:Man(3)GlcNAc(2)-PP-Dol alpha-1,2-mannosyltransferase (ALG11) (Debaryomyces hansenii (strain ATCC 36239 / CBS 767 / BCRC 21394 / JCM 1990 / NBRC 0083 / IGC 2968) (Yeast)).